The chain runs to 83 residues: MPSHCEGVSISSKEAKVLIKEHTCLVAIPILESGCVITGVDVSESELVWSIICDDEGFIALLENLEGVDFELIYKGKPPARTR.

This is an uncharacterized protein from Archaeoglobus fulgidus (strain ATCC 49558 / DSM 4304 / JCM 9628 / NBRC 100126 / VC-16).